The sequence spans 265 residues: MKKLAFAITATSGAAAFLTHHDAQASTQHTVQSGESLWSIAQKYNTSVESIKQNNQLDNNLVFPGQVISVGGSDAQNTSNTSPQAGSASSHTVQAGESLNIIASRYGVSVDQLMAANNLRGYLIMPNQTLQIPNGGSGGTTPTATTGSNGNASSFNHQNLYTAGQCTWYVFDRRAQAGSPISTYWSDAKYWAGNAANDGYQVNNTPSVGSIMQSTPGPYGHVAYVERVNGDGSILISEMNYTYGPYNMNYRTIPASEVSSYAFIH.

The signal sequence occupies residues 1 to 25 (MKKLAFAITATSGAAAFLTHHDAQA). LysM domains lie at 27–70 (TQHT…VISV) and 89–132 (SSHT…TLQI). The segment at 72–92 (GSDAQNTSNTSPQAGSASSHT) is disordered. A compositionally biased stretch (polar residues) spans 74–92 (DAQNTSNTSPQAGSASSHT). One can recognise a Peptidase C51 domain in the interval 141–265 (TPTATTGSNG…SEVSSYAFIH (125 aa)).

The catalysed reaction is Hydrolyzes the link between N-acetylmuramoyl residues and L-amino acid residues in certain cell-wall glycopeptides.. Functionally, has weak lytic activity toward S.aureus cells. The protein is Probable autolysin SsaALP of Staphylococcus aureus (strain NCTC 8325 / PS 47).